Consider the following 635-residue polypeptide: Threonine--tRNA ligase (635 aa).

Residues 1-152 (MQLLLIHSDY…AKAAVKPEAA (152 aa)) form an editing domain region. A catalytic region spans residues 215 to 514 (PHVELMRRLE…TEEGKVPMLP (300 aa)). The Zn(2+) site is built by C307, H359, and H483.

It belongs to the class-II aminoacyl-tRNA synthetase family. As to quaternary structure, homodimer. It depends on Zn(2+) as a cofactor.

The protein localises to the cytoplasm. The enzyme catalyses tRNA(Thr) + L-threonine + ATP = L-threonyl-tRNA(Thr) + AMP + diphosphate + H(+). Catalyzes the attachment of threonine to tRNA(Thr) in a two-step reaction: L-threonine is first activated by ATP to form Thr-AMP and then transferred to the acceptor end of tRNA(Thr). Also edits incorrectly charged L-seryl-tRNA(Thr). The polypeptide is Threonine--tRNA ligase (Methanosarcina acetivorans (strain ATCC 35395 / DSM 2834 / JCM 12185 / C2A)).